Reading from the N-terminus, the 233-residue chain is MKVGIIGAMEEEVTLLRDKIENRQTLSRAGCEIYTGQLNGIDVALLKSGIGKVSAAMGTTLLLEHCQPDIVINTGSAGGLASSLKVGDIVVSTEVRYHDADVTAFGYEPGQMAGCPAAFIADLKLIELAESCIKQLDLNAVRGLICSGDAFINGAAPLARIRTTFPSVAAVEMEAAAIGHVCYLFKTPFVVVRAISDVADQESHLSFDEFLVVAAKQSTLMIEAMLTSLAKRG.

Glu-12 (proton acceptor) is an active-site residue. Residues Gly-78, Ile-152, and 173-174 (ME) each bind substrate. The Proton donor role is filled by Asp-197.

It belongs to the PNP/UDP phosphorylase family. MtnN subfamily. In terms of assembly, homodimer.

The catalysed reaction is S-adenosyl-L-homocysteine + H2O = S-(5-deoxy-D-ribos-5-yl)-L-homocysteine + adenine. The enzyme catalyses S-methyl-5'-thioadenosine + H2O = 5-(methylsulfanyl)-D-ribose + adenine. It carries out the reaction 5'-deoxyadenosine + H2O = 5-deoxy-D-ribose + adenine. Its pathway is amino-acid biosynthesis; L-methionine biosynthesis via salvage pathway; S-methyl-5-thio-alpha-D-ribose 1-phosphate from S-methyl-5'-thioadenosine (hydrolase route): step 1/2. Its function is as follows. Catalyzes the irreversible cleavage of the glycosidic bond in both 5'-methylthioadenosine (MTA) and S-adenosylhomocysteine (SAH/AdoHcy) to adenine and the corresponding thioribose, 5'-methylthioribose and S-ribosylhomocysteine, respectively. Also cleaves 5'-deoxyadenosine, a toxic by-product of radical S-adenosylmethionine (SAM) enzymes, into 5-deoxyribose and adenine. Thus, is required for in vivo function of the radical SAM enzymes biotin synthase and lipoic acid synthase, that are inhibited by 5'-deoxyadenosine accumulation. The chain is 5'-methylthioadenosine/S-adenosylhomocysteine nucleosidase from Yersinia enterocolitica serotype O:8 / biotype 1B (strain NCTC 13174 / 8081).